A 110-amino-acid chain; its full sequence is ATP synthase subunit c (110 aa).

3 helical membrane-spanning segments follow: residues 4 to 24 (FFVILMVALVVVLTASAVFAA), 37 to 57 (ATAGALIGLGAAAGGGGAGMG), and 81 to 101 (FIVGLALIESLVIYVLVFVLI).

It belongs to the ATPase C chain family. As to quaternary structure, F-type ATPases have 2 components, F(1) - the catalytic core - and F(0) - the membrane proton channel. F(1) has five subunits: alpha(3), beta(3), gamma(1), delta(1), epsilon(1). F(0) has three main subunits: a(1), b(2) and c(10-14). The alpha and beta chains form an alternating ring which encloses part of the gamma chain. F(1) is attached to F(0) by a central stalk formed by the gamma and epsilon chains, while a peripheral stalk is formed by the delta and b chains.

It localises to the cell inner membrane. F(1)F(0) ATP synthase produces ATP from ADP in the presence of a proton or sodium gradient. F-type ATPases consist of two structural domains, F(1) containing the extramembraneous catalytic core and F(0) containing the membrane proton channel, linked together by a central stalk and a peripheral stalk. During catalysis, ATP synthesis in the catalytic domain of F(1) is coupled via a rotary mechanism of the central stalk subunits to proton translocation. Its function is as follows. Key component of the F(0) channel; it plays a direct role in translocation across the membrane. A homomeric c-ring of between 10-14 subunits forms the central stalk rotor element with the F(1) delta and epsilon subunits. In Thermodesulfovibrio yellowstonii (strain ATCC 51303 / DSM 11347 / YP87), this protein is ATP synthase subunit c.